The chain runs to 322 residues: TATA box-binding protein-associated factor RNA polymerase I subunit D (322 aa).

Disordered regions lie at residues 1-70 and 82-116; these read MAQS…SIEP and FKKKKRKKRKKRKYEPKLRPRGRPRGKPSGTRITR. Serine 23 carries the phosphoserine modification. Positions 82-107 are enriched in basic residues; the sequence is FKKKKRKKRKKRKYEPKLRPRGRPRG. Serine 137 is subject to Phosphoserine. Residues 198–219 form a disordered region; that stretch reads YMDDDGSLSPIEEPLTEDEATN. Serine 232 carries the post-translational modification Phosphoserine. The segment covering 257–267 has biased composition (basic and acidic residues); it reads FSKKAKDATHR. The segment at 257–276 is disordered; the sequence is FSKKAKDATHREKGHRRTLK.

In terms of assembly, component of the transcription factor SL1/TIF-IB complex, composed of TBP and at least TAF1A, TAF1B, TAF1C and TAF1D. Interacts with UBTF.

Its subcellular location is the nucleus. In terms of biological role, component of the transcription factor SL1/TIF-IB complex, which is involved in the assembly of the PIC (preinitiation complex) during RNA polymerase I-dependent transcription. The rate of PIC formation probably is primarily dependent on the rate of association of SL1/TIF-IB with the rDNA promoter. SL1/TIF-IB is involved in stabilization of nucleolar transcription factor 1/UBTF on rDNA. Formation of SL1/TIF-IB excludes the association of TBP with TFIID subunits. This is TATA box-binding protein-associated factor RNA polymerase I subunit D (Taf1d) from Mus musculus (Mouse).